Reading from the N-terminus, the 100-residue chain is uncharacterized protein (100 aa).

The tract at residues 40–100 (GDQMARKATS…DPTKNKSGRG (61 aa)) is disordered.

This is an uncharacterized protein from Mycobacterium tuberculosis (strain ATCC 25618 / H37Rv).